The sequence spans 66 residues: Large ribosomal subunit protein uL29 (66 aa).

It belongs to the universal ribosomal protein uL29 family. In terms of assembly, part of the 50S ribosomal subunit.

In Thermococcus kodakarensis (strain ATCC BAA-918 / JCM 12380 / KOD1) (Pyrococcus kodakaraensis (strain KOD1)), this protein is Large ribosomal subunit protein uL29.